Reading from the N-terminus, the 257-residue chain is Imidazole glycerol phosphate synthase subunit HisF (257 aa).

Active-site residues include Asp11 and Asp130.

Belongs to the HisA/HisF family. As to quaternary structure, heterodimer of HisH and HisF.

It is found in the cytoplasm. The catalysed reaction is 5-[(5-phospho-1-deoxy-D-ribulos-1-ylimino)methylamino]-1-(5-phospho-beta-D-ribosyl)imidazole-4-carboxamide + L-glutamine = D-erythro-1-(imidazol-4-yl)glycerol 3-phosphate + 5-amino-1-(5-phospho-beta-D-ribosyl)imidazole-4-carboxamide + L-glutamate + H(+). Its pathway is amino-acid biosynthesis; L-histidine biosynthesis; L-histidine from 5-phospho-alpha-D-ribose 1-diphosphate: step 5/9. Functionally, IGPS catalyzes the conversion of PRFAR and glutamine to IGP, AICAR and glutamate. The HisF subunit catalyzes the cyclization activity that produces IGP and AICAR from PRFAR using the ammonia provided by the HisH subunit. This is Imidazole glycerol phosphate synthase subunit HisF from Vibrio cholerae serotype O1 (strain ATCC 39541 / Classical Ogawa 395 / O395).